We begin with the raw amino-acid sequence, 339 residues long: Isopentenyl-diphosphate delta-isomerase (339 aa).

7–8 (RK) is a binding site for substrate. FMN-binding positions include Ser65, 66-68 (SMT), Ser96, and Asn125. 96-98 (SQR) lines the substrate pocket. Residue Gln160 coordinates substrate. Glu161 serves as a coordination point for Mg(2+). Residues Lys192, Thr222, and 293-294 (AG) each bind FMN.

The protein belongs to the IPP isomerase type 2 family. In terms of assembly, homooctamer. Dimer of tetramers. FMN is required as a cofactor. The cofactor is NADPH. Requires Mg(2+) as cofactor.

The protein localises to the cytoplasm. It catalyses the reaction isopentenyl diphosphate = dimethylallyl diphosphate. In terms of biological role, involved in the biosynthesis of isoprenoids. Catalyzes the 1,3-allylic rearrangement of the homoallylic substrate isopentenyl (IPP) to its allylic isomer, dimethylallyl diphosphate (DMAPP). This chain is Isopentenyl-diphosphate delta-isomerase, found in Vibrio campbellii (strain ATCC BAA-1116).